Here is a 253-residue protein sequence, read N- to C-terminus: Chitooligosaccharide deacetylase (253 aa).

Mg(2+) contacts are provided by His61 and His126.

It belongs to the YdjC deacetylase family. ChbG subfamily. Homodimer. The cofactor is Mg(2+).

It localises to the cytoplasm. It catalyses the reaction N,N'-diacetylchitobiose + H2O = N-acetyl-beta-D-glucosaminyl-(1-&gt;4)-D-glucosamine + acetate. The catalysed reaction is diacetylchitobiose-6'-phosphate + H2O = N'-monoacetylchitobiose-6'-phosphate + acetate. It participates in glycan degradation; chitin degradation. Involved in the degradation of chitin. ChbG is essential for growth on the acetylated chitooligosaccharides chitobiose and chitotriose but is dispensable for growth on cellobiose and chitosan dimer, the deacetylated form of chitobiose. Deacetylation of chitobiose-6-P and chitotriose-6-P is necessary for both the activation of the chb promoter by the regulatory protein ChbR and the hydrolysis of phosphorylated beta-glucosides by the phospho-beta-glucosidase ChbF. Catalyzes the removal of only one acetyl group from chitobiose-6-P to yield monoacetylchitobiose-6-P, the inducer of ChbR and the substrate of ChbF. The polypeptide is Chitooligosaccharide deacetylase (Yersinia pestis bv. Antiqua (strain Angola)).